Here is a 173-residue protein sequence, read N- to C-terminus: Crossover junction endodeoxyribonuclease RuvC (173 aa).

Catalysis depends on residues aspartate 8, glutamate 67, and aspartate 139. The Mg(2+) site is built by aspartate 8, glutamate 67, and aspartate 139.

It belongs to the RuvC family. In terms of assembly, homodimer which binds Holliday junction (HJ) DNA. The HJ becomes 2-fold symmetrical on binding to RuvC with unstacked arms; it has a different conformation from HJ DNA in complex with RuvA. In the full resolvosome a probable DNA-RuvA(4)-RuvB(12)-RuvC(2) complex forms which resolves the HJ. Mg(2+) serves as cofactor.

It localises to the cytoplasm. It carries out the reaction Endonucleolytic cleavage at a junction such as a reciprocal single-stranded crossover between two homologous DNA duplexes (Holliday junction).. The RuvA-RuvB-RuvC complex processes Holliday junction (HJ) DNA during genetic recombination and DNA repair. Endonuclease that resolves HJ intermediates. Cleaves cruciform DNA by making single-stranded nicks across the HJ at symmetrical positions within the homologous arms, yielding a 5'-phosphate and a 3'-hydroxyl group; requires a central core of homology in the junction. The consensus cleavage sequence is 5'-(A/T)TT(C/G)-3'. Cleavage occurs on the 3'-side of the TT dinucleotide at the point of strand exchange. HJ branch migration catalyzed by RuvA-RuvB allows RuvC to scan DNA until it finds its consensus sequence, where it cleaves and resolves the cruciform DNA. In Yersinia enterocolitica serotype O:8 / biotype 1B (strain NCTC 13174 / 8081), this protein is Crossover junction endodeoxyribonuclease RuvC.